The chain runs to 140 residues: MIQKLFLLVRSLVILSIMLYLGNLIAYYIPSGVPGSIWGLLLLFLGLTTRVIHLNWIYLGASLLIRFMAVLFVPVSVGIIKYSDLLIEQINILLVPNIVSTCVTLLVIGFLGHYLYQMQSFTHKRKKVIKRRENQVKQAN.

Helical transmembrane passes span 1–21 (MIQK…MLYL), 33–52 (VPGS…TRVI), 60–80 (GASL…VGII), and 92–112 (ILLV…GFLG).

Belongs to the UPF0299 family.

It is found in the cell inner membrane. The protein is UPF0299 membrane protein CGSHiGG_01475 of Haemophilus influenzae (strain PittGG).